The following is a 194-amino-acid chain: Large ribosomal subunit protein bL9 (194 aa).

Residues 169-194 (DDINDNARPENFFDPNAEFDGGEDNA) form a disordered region.

It belongs to the bacterial ribosomal protein bL9 family.

Its function is as follows. Binds to the 23S rRNA. The protein is Large ribosomal subunit protein bL9 of Mesorhizobium japonicum (strain LMG 29417 / CECT 9101 / MAFF 303099) (Mesorhizobium loti (strain MAFF 303099)).